The sequence spans 433 residues: O-methyltransferase hasC (433 aa).

Residues Glu265 and 293-295 (GDF) each bind S-adenosyl-L-methionine. His313 serves as the catalytic Proton acceptor. Residues 413 to 433 (SPRANGNGNSAGGLEWESELM) form a disordered region.

This sequence belongs to the class I-like SAM-binding methyltransferase superfamily. Cation-independent O-methyltransferase family. COMT subfamily.

Its pathway is secondary metabolite biosynthesis. In terms of biological role, O-methyltransferase; part of the gene cluster that mediates the biosynthesis of hexadehydro-astechrome (HAS), a tryptophan-derived iron(III)-complex that acts as a virulence factor in infected mice. Within the pathway, hasC, with the cytochrome P450 monooxygenase hasH and the FAD-linked oxidoreductase hasG, convert the hasE-prenylated Trp-Ala-dipeptide into an O-methylated diketopiperazine that is then released from the hasD NRPS. The HAS biosynthesis begins with the synthesis of a tethered Trp-Ala dipeptide by the NRPS hasD. The 7-dimethylallyltryptophan synthase hasE then catalyzes the prenylation of the hasD-tethered tryptophan or the resulting tethered Trp-Ala dipeptide at the C-7 position of the indole moiety. HAS biosynthesis continues via tethered intermediates with the succesive actions of the cytochrome P450 monooxygenase hasH, the O-methyltransferase hasC, and the FAD-linked oxidoreductase hasG. The resulting O-methylated diketopiperazine is then released from hasD. Finally, three O-methylated diketopiperazine molecules assemble in a trimeric complex with Fe(III) to produce hexadehydro-astechrome. The protein is O-methyltransferase hasC of Aspergillus fumigatus (strain CBS 144.89 / FGSC A1163 / CEA10) (Neosartorya fumigata).